The sequence spans 554 residues: MAAKIIKFDQEGRNAILKGVNILADTVKVTLGPKGRNVVIDKSFGAPLITKDGVTVAKEIELEDKFENMGAQLVKEVASKTSDVAGDGTTTATVLAQAIYRQGSKLVAAGHNPMEIKRGIDKAVETIVAELQKISKPIVDHKEIAQVGTISANNDKTIGDIIAEAMEKVGKEGVITVEEAKSMDTTLETVEGMQFDRGYLSPYFVTDPERMEAALENALILIHDKKISNMKDLLPILEQTAKSGRPLLIIAEDIEGEALATLVVNKLRGVLNVAAVKAPGFGDRRKAMLEDIATLTGGLVISEEVGHKLEQATMDMLGRAKRITIDKDNTTIIDGEGKEADIQGRVKQIRAQIEETTSDYDKEKLQERLAKLVGGVAVIKVGAATEVEMKEKKARVEDALHATRAAVDEGVVPGGGVAYIRTLSALDNLNLENEQQFGVTVVKLALEAPIRQIADNAGIDASIVVDKVRNGKDAFGYDAASDEYVDMLKAGIIDPTKVSRSALQNASSIAGLMLTTEALIAEKPREEGAMGGGMPGGMGGMGGMGGMGGMGGMM.

Residues 30 to 33 (TLGP), Lys-51, 87 to 91 (DGTTT), Gly-415, 478 to 480 (DAA), and Asp-494 each bind ATP.

It belongs to the chaperonin (HSP60) family. As to quaternary structure, forms a cylinder of 14 subunits composed of two heptameric rings stacked back-to-back. Interacts with the co-chaperonin GroES.

The protein localises to the cytoplasm. It catalyses the reaction ATP + H2O + a folded polypeptide = ADP + phosphate + an unfolded polypeptide.. Its function is as follows. Together with its co-chaperonin GroES, plays an essential role in assisting protein folding. The GroEL-GroES system forms a nano-cage that allows encapsulation of the non-native substrate proteins and provides a physical environment optimized to promote and accelerate protein folding. This is Chaperonin GroEL from Pelobacter propionicus (strain DSM 2379 / NBRC 103807 / OttBd1).